A 186-amino-acid polypeptide reads, in one-letter code: MTTTALTTASPSQVRQNYHQDSEAAINRQINLELYASYVYLSMSCYFDRDDVALKNFAKYFLHQSHEEREHAEKLMKLQNQRGGRIFLQDIKKPDRDDWESGLNAMECALHLEKSVNQSLLELHKLATDKNDPHLCDFIETHYLNEQVKSIKELGDHVTNLRKMGAPEAGMAEYLFDKHTLGHSES.

The 150-residue stretch at 16–165 (QNYHQDSEAA…DHVTNLRKMG (150 aa)) folds into the Ferritin-like diiron domain. Positions 33, 68, 71, 113, and 147 each coordinate Fe cation. S184 carries the phosphoserine modification.

This sequence belongs to the ferritin family. Oligomer of 24 subunits. There are two types of subunits: L (light) chain and H (heavy) chain. The major chain can be light or heavy, depending on the species and tissue type. The functional molecule forms a roughly spherical shell with a diameter of 12 nm and contains a central cavity into which the insoluble mineral iron core is deposited. Interacts with NCOA4; NCOA4 promotes targeting of the iron-binding ferritin complex to autolysosomes following starvation or iron depletion.

It is found in the cytoplasm. The protein localises to the lysosome. It localises to the cytoplasmic vesicle. Its subcellular location is the autophagosome. It carries out the reaction 4 Fe(2+) + O2 + 4 H(+) = 4 Fe(3+) + 2 H2O. Functionally, stores iron in a soluble, non-toxic, readily available form. Important for iron homeostasis. Has ferroxidase activity. Iron is taken up in the ferrous form and deposited as ferric hydroxides after oxidation. Also plays a role in delivery of iron to cells. Mediates iron uptake in capsule cells of the developing kidney. Delivery to lysosomes is mediated by the cargo receptor NCOA4 for autophagic degradation and release of iron. The polypeptide is Ferritin heavy chain (FTH1) (Cricetulus griseus (Chinese hamster)).